The chain runs to 435 residues: Chaperone SurA (435 aa).

Residues 1-29 (MINKTLHTKHTLLGLLAMAVLMIPVWSQA) form the signal peptide. PpiC domains lie at 180–281 (QEDF…KMID) and 290–390 (VTQY…RVDD).

It is found in the periplasm. It catalyses the reaction [protein]-peptidylproline (omega=180) = [protein]-peptidylproline (omega=0). Chaperone involved in the correct folding and assembly of outer membrane proteins. Recognizes specific patterns of aromatic residues and the orientation of their side chains, which are found more frequently in integral outer membrane proteins. May act in both early periplasmic and late outer membrane-associated steps of protein maturation. The sequence is that of Chaperone SurA from Alcanivorax borkumensis (strain ATCC 700651 / DSM 11573 / NCIMB 13689 / SK2).